The primary structure comprises 712 residues: Lactoperoxidase (712 aa).

Residues 1–22 (MWVCLQLPVFLASVTLFEVAAS) form the signal peptide. The propeptide occupies 23–100 (DTIAQAASTT…WEESFKRLRR (78 aa)). N106 carries an N-linked (GlcNAc...) (complex) asparagine; alternate glycan. N106 carries N-linked (GlcNAc...) (hybrid) asparagine; alternate glycosylation. Disulfide bonds link C123-C284, C132-C145, C246-C256, and C250-C274. An N-linked (GlcNAc...) (complex) asparagine; alternate glycan is attached at N212. N212 carries N-linked (GlcNAc...) (high mannose) asparagine; alternate glycosylation. Residue D225 coordinates heme b. The Proton acceptor role is filled by H226. A Ca(2+)-binding site is contributed by D227. Residues T301, F303, D305, and S307 each coordinate Ca(2+). S315 is modified (phosphoserine). Residue N322 is glycosylated (N-linked (GlcNAc...) (high mannose) asparagine). C354 and C365 are joined by a disulfide. Residue N358 is glycosylated (N-linked (GlcNAc...) asparagine). E375 serves as a coordination point for heme b. N449 carries N-linked (GlcNAc...) (complex) asparagine; alternate glycosylation. N449 carries N-linked (GlcNAc...) (hybrid) asparagine; alternate glycosylation. An N-linked (GlcNAc...) (high mannose) asparagine; alternate glycan is attached at N449. H468 lines the heme b pocket. Y482 bears the 3'-nitrotyrosine mark. Disulfide bonds link C573/C630 and C671/C696.

The protein belongs to the peroxidase family. XPO subfamily. Requires Ca(2+) as cofactor. Heme b serves as cofactor. As to expression, mammary gland; milk.

It is found in the secreted. Its subcellular location is the cytoplasm. It carries out the reaction 2 a phenolic donor + H2O2 = 2 a phenolic radical donor + 2 H2O. It catalyses the reaction thiocyanate + H2O2 + H(+) = hypothiocyanous acid + H2O. The catalysed reaction is iodide + H2O2 = hypoiodite + H2O. In terms of biological role, heme-containing oxidoreductase which catalyzes the conversion of thiocyanate (SCN(-)) into antimicrobial agent hypothiocyanous acid (OSCN(-)) in the presence of hydrogen peroxide (H2O2). Also involved in the conversion of iodide (I(-)) into hypoiodite (IO(-)) in the presence of H2O2. Responsible for the inactivation of a wide range of micro-organisms and hence, important component of defense mechanism. Shows antibacterial properties against E.coli, K.pneumoniae, P.aeruginosa, S.sonnei, S.saphrophyticus, S.epidermidis and S.dysenteriae. May protect the udder from infection and may promote growth in newborns. May be implicated in airway host defense against infection. May contribute to maintaining an appropriate H2O2 cellular level, therefore protecting cells from H2O2-caused injuries and inflammation. This Bubalus bubalis (Domestic water buffalo) protein is Lactoperoxidase.